The sequence spans 249 residues: Probable transcriptional regulatory protein IL1088 (249 aa).

It belongs to the TACO1 family.

The protein resides in the cytoplasm. The chain is Probable transcriptional regulatory protein IL1088 from Idiomarina loihiensis (strain ATCC BAA-735 / DSM 15497 / L2-TR).